The primary structure comprises 389 residues: Arginine biosynthesis bifunctional protein ArgJ (389 aa).

Substrate contacts are provided by threonine 150, lysine 173, threonine 184, glutamate 263, asparagine 384, and threonine 389. Threonine 184 (nucleophile) is an active-site residue.

The protein belongs to the ArgJ family. Heterotetramer of two alpha and two beta chains.

It is found in the cytoplasm. The catalysed reaction is N(2)-acetyl-L-ornithine + L-glutamate = N-acetyl-L-glutamate + L-ornithine. The enzyme catalyses L-glutamate + acetyl-CoA = N-acetyl-L-glutamate + CoA + H(+). It functions in the pathway amino-acid biosynthesis; L-arginine biosynthesis; L-ornithine and N-acetyl-L-glutamate from L-glutamate and N(2)-acetyl-L-ornithine (cyclic): step 1/1. Its pathway is amino-acid biosynthesis; L-arginine biosynthesis; N(2)-acetyl-L-ornithine from L-glutamate: step 1/4. Catalyzes two activities which are involved in the cyclic version of arginine biosynthesis: the synthesis of N-acetylglutamate from glutamate and acetyl-CoA as the acetyl donor, and of ornithine by transacetylation between N(2)-acetylornithine and glutamate. This Deinococcus radiodurans (strain ATCC 13939 / DSM 20539 / JCM 16871 / CCUG 27074 / LMG 4051 / NBRC 15346 / NCIMB 9279 / VKM B-1422 / R1) protein is Arginine biosynthesis bifunctional protein ArgJ.